Reading from the N-terminus, the 747-residue chain is Polyribonucleotide nucleotidyltransferase (747 aa).

Positions 487 and 493 each coordinate Mg(2+). Positions 554–613 (PSTTTIKIDKDKIRDIIGPGGKIIKEICETSGAKIDISDDGTVSVYAADRDKLKIASDKI) constitute a KH domain. The region spanning 623–691 (GEIFNGTVTK…NKGKAKLTIK (69 aa)) is the S1 motif domain. The disordered stretch occupies residues 694-716 (DKDKSLNNPKPQNSINNAKENSE). A compositionally biased stretch (polar residues) spans 699–712 (LNNPKPQNSINNAK).

This sequence belongs to the polyribonucleotide nucleotidyltransferase family. It depends on Mg(2+) as a cofactor.

It is found in the cytoplasm. It catalyses the reaction RNA(n+1) + phosphate = RNA(n) + a ribonucleoside 5'-diphosphate. In terms of biological role, involved in mRNA degradation. Catalyzes the phosphorolysis of single-stranded polyribonucleotides processively in the 3'- to 5'-direction. The sequence is that of Polyribonucleotide nucleotidyltransferase from Rickettsia canadensis (strain McKiel).